Here is a 240-residue protein sequence, read N- to C-terminus: REF/SRPP-like protein At1g67360 (240 aa).

Residues 208–240 form a disordered region; that stretch reads KEDARRKKGGDTAGKKGETTDAADGDKSSSDSE.

Belongs to the REF/SRPP family.

This Arabidopsis thaliana (Mouse-ear cress) protein is REF/SRPP-like protein At1g67360.